Reading from the N-terminus, the 1084-residue chain is Carbamoyl phosphate synthase large chain (1084 aa).

Positions 1–401 (MPRRQDVEKV…ALLKAVRSLE (401 aa)) are carboxyphosphate synthetic domain. ATP contacts are provided by Arg129, Arg169, Gly175, Gly176, Arg208, Leu210, Glu215, Gly241, Val242, His243, Gln284, and Glu298. Residues 133–327 (RALMKEIGEP…IAKVAAKIAV (195 aa)) enclose the ATP-grasp 1 domain. Gln284, Glu298, and Asn300 together coordinate Mg(2+). Mn(2+) contacts are provided by Gln284, Glu298, and Asn300. The segment at 402 to 546 (TGRDGLFHPA…YSCYDEENEA (145 aa)) is oligomerization domain. Residues 547-947 (VSPPGRKAVV…ALYKALLASG (401 aa)) form a carbamoyl phosphate synthetic domain region. The ATP-grasp 2 domain maps to 672-862 (DQLLSDLSIP…LAKVATQVIA (191 aa)). Positions 708, 747, 753, 778, 779, 780, 781, 821, and 833 each coordinate ATP. Residues Gln821, Glu833, and Asn835 each contribute to the Mg(2+) site. 3 residues coordinate Mn(2+): Gln821, Glu833, and Asn835. Residues 948–1084 (VRVPHRGTVL…VGISAVQDWV (137 aa)) enclose the MGS-like domain. Residues 948 to 1084 (VRVPHRGTVL…VGISAVQDWV (137 aa)) are allosteric domain.

This sequence belongs to the CarB family. Composed of two chains; the small (or glutamine) chain promotes the hydrolysis of glutamine to ammonia, which is used by the large (or ammonia) chain to synthesize carbamoyl phosphate. Tetramer of heterodimers (alpha,beta)4. Mg(2+) is required as a cofactor. The cofactor is Mn(2+).

The enzyme catalyses hydrogencarbonate + L-glutamine + 2 ATP + H2O = carbamoyl phosphate + L-glutamate + 2 ADP + phosphate + 2 H(+). It catalyses the reaction hydrogencarbonate + NH4(+) + 2 ATP = carbamoyl phosphate + 2 ADP + phosphate + 2 H(+). It participates in amino-acid biosynthesis; L-arginine biosynthesis; carbamoyl phosphate from bicarbonate: step 1/1. It functions in the pathway pyrimidine metabolism; UMP biosynthesis via de novo pathway; (S)-dihydroorotate from bicarbonate: step 1/3. Its function is as follows. Large subunit of the glutamine-dependent carbamoyl phosphate synthetase (CPSase). CPSase catalyzes the formation of carbamoyl phosphate from the ammonia moiety of glutamine, carbonate, and phosphate donated by ATP, constituting the first step of 2 biosynthetic pathways, one leading to arginine and/or urea and the other to pyrimidine nucleotides. The large subunit (synthetase) binds the substrates ammonia (free or transferred from glutamine from the small subunit), hydrogencarbonate and ATP and carries out an ATP-coupled ligase reaction, activating hydrogencarbonate by forming carboxy phosphate which reacts with ammonia to form carbamoyl phosphate. This chain is Carbamoyl phosphate synthase large chain, found in Symbiobacterium thermophilum (strain DSM 24528 / JCM 14929 / IAM 14863 / T).